Reading from the N-terminus, the 402-residue chain is 4-hydroxy-3-methylbut-2-enyl diphosphate reductase (402 aa).

Cys-66 contacts [4Fe-4S] cluster. His-96 contributes to the (2E)-4-hydroxy-3-methylbut-2-enyl diphosphate binding site. His-96 is a dimethylallyl diphosphate binding site. His-96 provides a ligand contact to isopentenyl diphosphate. Cys-157 serves as a coordination point for [4Fe-4S] cluster. A (2E)-4-hydroxy-3-methylbut-2-enyl diphosphate-binding site is contributed by His-185. His-185 is a binding site for dimethylallyl diphosphate. His-185 provides a ligand contact to isopentenyl diphosphate. Catalysis depends on Glu-187, which acts as the Proton donor. Thr-250 provides a ligand contact to (2E)-4-hydroxy-3-methylbut-2-enyl diphosphate. Cys-288 provides a ligand contact to [4Fe-4S] cluster. 4 residues coordinate (2E)-4-hydroxy-3-methylbut-2-enyl diphosphate: Ser-317, Ser-318, Asn-319, and Ser-379. The dimethylallyl diphosphate site is built by Ser-317, Ser-318, Asn-319, and Ser-379. 4 residues coordinate isopentenyl diphosphate: Ser-317, Ser-318, Asn-319, and Ser-379.

It belongs to the IspH family. It depends on [4Fe-4S] cluster as a cofactor.

It carries out the reaction isopentenyl diphosphate + 2 oxidized [2Fe-2S]-[ferredoxin] + H2O = (2E)-4-hydroxy-3-methylbut-2-enyl diphosphate + 2 reduced [2Fe-2S]-[ferredoxin] + 2 H(+). The enzyme catalyses dimethylallyl diphosphate + 2 oxidized [2Fe-2S]-[ferredoxin] + H2O = (2E)-4-hydroxy-3-methylbut-2-enyl diphosphate + 2 reduced [2Fe-2S]-[ferredoxin] + 2 H(+). It functions in the pathway isoprenoid biosynthesis; dimethylallyl diphosphate biosynthesis; dimethylallyl diphosphate from (2E)-4-hydroxy-3-methylbutenyl diphosphate: step 1/1. It participates in isoprenoid biosynthesis; isopentenyl diphosphate biosynthesis via DXP pathway; isopentenyl diphosphate from 1-deoxy-D-xylulose 5-phosphate: step 6/6. In terms of biological role, catalyzes the conversion of 1-hydroxy-2-methyl-2-(E)-butenyl 4-diphosphate (HMBPP) into a mixture of isopentenyl diphosphate (IPP) and dimethylallyl diphosphate (DMAPP). Acts in the terminal step of the DOXP/MEP pathway for isoprenoid precursor biosynthesis. The protein is 4-hydroxy-3-methylbut-2-enyl diphosphate reductase of Nostoc sp. (strain PCC 7120 / SAG 25.82 / UTEX 2576).